The sequence spans 291 residues: MDGPFGFVVIDKPAGHTSHSCVSRLRRCYGLKRVGHGGTLDPAVTGVLPIALGPATRLLPYLPGDKTYRGVIQLGSITSSDDLEGELLRQAPWPDLQPEELEVALAPFRGPIQQRPPQVSAVHVDGERAHARARRGEQMVLPPRPVTIHRLQLLHWDPNQGQLTLEVHCSAGTYIRSLARDLGEQLGCGGCLAQLRRTQALGFLESQAQALPEADATPPPPLSPLLALEHLPRRQLTDSEEADWRCGRRLSLDPGPGDAVVVCNADGSMAGIGLRQEDDQLQPKVVFDASG.

Residue Asp-41 is the Nucleophile of the active site.

This sequence belongs to the pseudouridine synthase TruB family. Type 1 subfamily.

The enzyme catalyses uridine(55) in tRNA = pseudouridine(55) in tRNA. Its function is as follows. Responsible for synthesis of pseudouridine from uracil-55 in the psi GC loop of transfer RNAs. In Parasynechococcus marenigrum (strain WH8102), this protein is tRNA pseudouridine synthase B.